The primary structure comprises 137 residues: Large ribosomal subunit protein uL16 (137 aa).

This sequence belongs to the universal ribosomal protein uL16 family. In terms of assembly, part of the 50S ribosomal subunit.

Binds 23S rRNA and is also seen to make contacts with the A and possibly P site tRNAs. The protein is Large ribosomal subunit protein uL16 of Rhodopseudomonas palustris (strain BisB5).